A 73-amino-acid chain; its full sequence is Large ribosomal subunit protein bL31 (73 aa).

Zn(2+)-binding residues include Cys16, Cys18, Cys38, and Cys41.

Belongs to the bacterial ribosomal protein bL31 family. Type A subfamily. As to quaternary structure, part of the 50S ribosomal subunit. Requires Zn(2+) as cofactor.

Its function is as follows. Binds the 23S rRNA. This is Large ribosomal subunit protein bL31 from Vibrio vulnificus (strain CMCP6).